We begin with the raw amino-acid sequence, 547 residues long: Glucose-6-phosphate isomerase (547 aa).

The active-site Proton donor is E351. Catalysis depends on residues H382 and K509.

This sequence belongs to the GPI family.

Its subcellular location is the cytoplasm. It carries out the reaction alpha-D-glucose 6-phosphate = beta-D-fructose 6-phosphate. It functions in the pathway carbohydrate biosynthesis; gluconeogenesis. The protein operates within carbohydrate degradation; glycolysis; D-glyceraldehyde 3-phosphate and glycerone phosphate from D-glucose: step 2/4. In terms of biological role, catalyzes the reversible isomerization of glucose-6-phosphate to fructose-6-phosphate. The protein is Glucose-6-phosphate isomerase of Coxiella burnetii (strain RSA 493 / Nine Mile phase I).